Consider the following 362-residue polypeptide: 3-dehydroquinate synthase (362 aa).

NAD(+) is bound by residues 71 to 76 (DGEQYK), 105 to 109 (GVVGD), 129 to 130 (TT), lysine 142, lysine 151, and 169 to 172 (CLKT). 3 residues coordinate Zn(2+): glutamate 184, histidine 247, and histidine 264.

It belongs to the sugar phosphate cyclases superfamily. Dehydroquinate synthase family. The cofactor is Co(2+). Zn(2+) serves as cofactor. NAD(+) is required as a cofactor.

The protein resides in the cytoplasm. It catalyses the reaction 7-phospho-2-dehydro-3-deoxy-D-arabino-heptonate = 3-dehydroquinate + phosphate. Its pathway is metabolic intermediate biosynthesis; chorismate biosynthesis; chorismate from D-erythrose 4-phosphate and phosphoenolpyruvate: step 2/7. Its function is as follows. Catalyzes the conversion of 3-deoxy-D-arabino-heptulosonate 7-phosphate (DAHP) to dehydroquinate (DHQ). The protein is 3-dehydroquinate synthase of Escherichia coli (strain K12 / MC4100 / BW2952).